The chain runs to 161 residues: Type IV major fimbrial protein FimA (161 aa).

Positions 1 to 7 (MKSLQKG) are cleaved as a propeptide — leader sequence. F8 is modified (N-methylphenylalanine). Residues 8 to 28 (FTLIELMIVVAIIGILAAFAI) form a helical membrane-spanning segment. A disulfide bridge connects residues C63 and C105.

The protein belongs to the N-Me-Phe pilin family. As to quaternary structure, the pili are polar flexible filaments of about 5.4 nanometers diameter and 2.5 micrometers average length; they consist of only a single polypeptide chain arranged in a helical configuration of five subunits per turn in the assembled pilus.

It localises to the fimbrium. The protein localises to the membrane. Its function is as follows. Major component of the type IV fimbriae that plays an essential role in twitching motility, natural transformation, and protease secretion. The protein is Type IV major fimbrial protein FimA (fimA) of Dichelobacter nodosus (Bacteroides nodosus).